The following is a 143-amino-acid chain: Large ribosomal subunit protein uL11 (143 aa).

The protein belongs to the universal ribosomal protein uL11 family. Part of the ribosomal stalk of the 50S ribosomal subunit. Interacts with L10 and the large rRNA to form the base of the stalk. L10 forms an elongated spine to which L12 dimers bind in a sequential fashion forming a multimeric L10(L12)X complex. In terms of processing, one or more lysine residues are methylated.

Functionally, forms part of the ribosomal stalk which helps the ribosome interact with GTP-bound translation factors. The chain is Large ribosomal subunit protein uL11 from Dechloromonas aromatica (strain RCB).